Here is a 75-residue protein sequence, read N- to C-terminus: Serine rich endogenous peptide 20 (75 aa).

The first 25 residues, 1 to 25 (MYKLTLCILTLSFLLLSGLSNTVLA), serve as a signal peptide directing secretion. Residues 52-66 (KIGASGSNSGRAPSC) carry the SCOOP motif motif. Residues 54-75 (GASGSNSGRAPSCNNSCKPNRP) form a disordered region. The SxS motif essential for MIK2 binding signature appears at 56 to 58 (SGS). The span at 56 to 75 (SGSNSGRAPSCNNSCKPNRP) shows a compositional bias: polar residues.

Belongs to the serine rich endogenous peptide (SCOOP) phytocytokine family. In terms of assembly, interacts with MIK2 (via extracellular leucine-rich repeat domain); this interaction triggers the formation of complex between MIK2 and the BAK1/SERK3 and SERK4 coreceptors, and subsequent BAK1 activation by phosphorylation. Mostly expressed in roots.

It localises to the cell membrane. The protein resides in the secreted. It is found in the extracellular space. Its subcellular location is the apoplast. Functionally, brassicaceae-specific phytocytokine (plant endogenous peptide released into the apoplast) perceived by MIK2 in a BAK1/SERK3 and SERK4 coreceptors-dependent manner, that modulates various physiological and antimicrobial processes including growth prevention and reactive oxygen species (ROS) response regulation. Inhibits root growth. This chain is Serine rich endogenous peptide 20, found in Arabidopsis thaliana (Mouse-ear cress).